The sequence spans 995 residues: KN motif and ankyrin repeat domain-containing protein 4 (995 aa).

Disordered stretches follow at residues 1–29 and 68–127; these read MEKT…SVET and TLPR…EVSY. Over residues 101 to 124 the composition is skewed to polar residues; that stretch reads LGTQEQNQSPPLGNAPQASTSRSE. Residues 343-404 are a coiled coil; that stretch reads SSLKQQVSAL…EGQFHQENAK (62 aa). Disordered regions lie at residues 443–467, 503–558, 617–642, 663–705, and 721–740; these read ESWG…GNQS, EAGT…PTDA, QAHP…TSLK, LQFV…PDHK, and PEGT…VPHS. The span at 511-523 shows a compositional bias: gly residues; the sequence is GPQGGTRGAGGFL. A compositionally biased stretch (basic and acidic residues) spans 526 to 549; it reads SDRKTPPAGREETSSNLPGKEHPG. Residues 625–640 show a composition bias toward low complexity; that stretch reads PASSSSPPVEISPSTS. The segment covering 680–693 has biased composition (acidic residues); the sequence is TSGEDSTPEDLSDS. The segment covering 694 to 705 has biased composition (basic and acidic residues); that stretch reads EAEKKCDGPDHK. ANK repeat units follow at residues 823–853, 862–890, 895–924, 928–958, and 962–992; these read NGNT…NVDH, VMIT…NVNI, GGQT…DVNL, DGSS…DSSL, and AGRT…QGRS.

In terms of tissue distribution, strongly expressed in colon, liver, lung, skeletal muscle and kidney.

It is found in the cytoplasm. Its function is as follows. May be involved in the control of cytoskeleton formation by regulating actin polymerization. This is KN motif and ankyrin repeat domain-containing protein 4 (KANK4) from Homo sapiens (Human).